The sequence spans 44 residues: MKRTFQPSNIRRNRTHGFRARMSSKSGRNIISHRRSKLRSVLCV.

The protein belongs to the bacterial ribosomal protein bL34 family.

This is Large ribosomal subunit protein bL34 from Buchnera aphidicola subsp. Cinara cedri (strain Cc).